The chain runs to 306 residues: Ribonuclease H2 subunit B (306 aa).

The segment at 232 to 285 (LPDLSSPTPEPPVKKRRVSDAPVEADEDYTKYNSDNKSRKSNSKMTAAQKSLAK) is disordered. Residues 259 to 269 (DYTKYNSDNKS) show a composition bias toward basic and acidic residues.

It belongs to the RNase H2 subunit B family. In terms of assembly, the RNase H2 complex is a heterotrimer composed of the catalytic subunit RNASEH2A and the non-catalytic subunits RNASEH2B and RNASEH2C.

The protein resides in the nucleus. Its function is as follows. Non catalytic subunit of RNase H2, an endonuclease that specifically degrades the RNA of RNA:DNA hybrids. Participates in DNA replication, possibly by mediating the removal of lagging-strand Okazaki fragment RNA primers during DNA replication. Mediates the excision of single ribonucleotides from DNA:RNA duplexes. This Xenopus laevis (African clawed frog) protein is Ribonuclease H2 subunit B (rnaseh2b).